The chain runs to 91 residues: UPF0728 protein v1g117062 (91 aa).

Belongs to the UPF0728 family.

The protein is UPF0728 protein v1g117062 of Nematostella vectensis (Starlet sea anemone).